The primary structure comprises 485 residues: REST corepressor 1 (485 aa).

2 disordered regions span residues 1–26 (MPAM…ASAS) and 49–110 (AAAS…VGPQ). 2 stretches are compositionally biased toward low complexity: residues 49–64 (AAAS…AAAA) and 74–95 (AAAA…SGSS). The interval 78–257 (PNGNSSSNSW…RHARKQKRER (180 aa)) is interaction with HDAC1. Residues 103–189 (GGMRVGPQYQ…KSLADLPNFT (87 aa)) enclose the ELM2 domain. K122 participates in a covalent cross-link: Glycyl lysine isopeptide (Lys-Gly) (interchain with G-Cter in SUMO2). S127 is subject to Phosphoserine. The 52-residue stretch at 190–241 (PFPDEWTVEDKVLFEQAFSFHGKTFHRIQQMLPDKSIASLVKFYYSWKKTRT) folds into the SANT 1 domain. A coiled-coil region spans residues 244–273 (SVMDRHARKQKREREESEDELEEANGNNPI). Residues 244–314 (SVMDRHARKQ…AKNRAKRKPP (71 aa)) form a disordered region. Residue S260 is modified to Phosphoserine. A compositionally biased stretch (basic and acidic residues) spans 278–288 (DQNKESKKEVP). The tract at residues 296-384 (VKKEKHSTQA…LPEVIQKCNA (89 aa)) is interaction with KDM1A. Residue K297 forms a Glycyl lysine isopeptide (Lys-Gly) (interchain with G-Cter in SUMO2) linkage. A coiled-coil region spans residues 334–369 (ATTVLRQLDMELVSVKRQIQNIKQTNSALKEKLDGG). An SANT 2 domain is found at 381–432 (KCNARWTTEEQLLAVQAIRKYGRDFQAISDVIGNKSVVQVKNFFVNYRRRFN). Residues 442 to 485 (AEHGKEETNGPSNQKPVKSPDNSIKMPEEEDEAPVLDVRYASAS) form a disordered region. A compositionally biased stretch (polar residues) spans 450-463 (NGPSNQKPVKSPDN). S460 carries the phosphoserine modification. K466 is covalently cross-linked (Glycyl lysine isopeptide (Lys-Gly) (interchain with G-Cter in SUMO2)).

It belongs to the CoREST family. Interacts directly with GFI1 and GFI1B in a RCOR/GFI/KDM1A/HDAC complex. Interacts with INMS1. Component of a BHC histone deacetylase complex that contains HDAC1, HDAC2, HMG20B/BRAF35, KDM1A, RCOR1/CoREST and PHF21A/BHC80. The BHC complex may also contain ZMYM2, ZNF217, ZMYM3, GSE1 and GTF2I. Interacts with REST. Interacts with the SMARCE1/BAF57, suggesting that the BHC complex may recruit the ATP-dependent chromatin-remodeling SWI-SNF complex. Interacts with SOX2. As to quaternary structure, (Microbial infection) Interacts with herpes virus HSV-1 ICP0 protein; the interaction leads to the disruption of the BHC complex, thereby preventing the BHC complex from repressing transcription of viral genes. Post-translationally, phosphorylated by HSV-1 protein kinases in case of infection. As to expression, ubiquitously expressed.

Its subcellular location is the nucleus. In terms of biological role, essential component of the BHC complex, a corepressor complex that represses transcription of neuron-specific genes in non-neuronal cells. The BHC complex is recruited at RE1/NRSE sites by REST and acts by deacetylating and demethylating specific sites on histones, thereby acting as a chromatin modifier. In the BHC complex, it serves as a molecular beacon for the recruitment of molecular machinery, including MeCP2 and SUV39H1, that imposes silencing across a chromosomal interval. Plays a central role in demethylation of Lys-4 of histone H3 by promoting demethylase activity of KDM1A on core histones and nucleosomal substrates. It also protects KDM1A from the proteasome. Component of a RCOR/GFI/KDM1A/HDAC complex that suppresses, via histone deacetylase (HDAC) recruitment, a number of genes implicated in multilineage blood cell development and controls hematopoietic differentiation. This Homo sapiens (Human) protein is REST corepressor 1 (RCOR1).